The sequence spans 529 residues: Pheophorbide a oxygenase, chloroplastic (529 aa).

Disordered stretches follow at residues 1–24 (MPVM…RRVP) and 46–72 (LRVA…TSSA). The N-terminal 47 residues, 1–47 (MPVMAPTASLLLSPRPLPASRRVPSLPALSASGRLRLRRARADTRLR), are a transit peptide targeting the chloroplast. The Rieske domain occupies 82–194 (WYPVSLVEDL…TLVSQGLLFV (113 aa)). Residues cysteine 124, histidine 126, cysteine 144, and histidine 147 each coordinate [2Fe-2S] cluster.

The cofactor is [2Fe-2S] cluster. In terms of tissue distribution, expressed in leaves. Expressed at low levels in roots, stems, panicles and seeds.

It is found in the plastid. Its subcellular location is the chloroplast. It catalyses the reaction pheophorbide a + 2 reduced [2Fe-2S]-[ferredoxin] + O2 + 2 H(+) = red chlorophyll catabolite + 2 oxidized [2Fe-2S]-[ferredoxin]. It functions in the pathway porphyrin-containing compound metabolism; chlorophyll degradation. In terms of biological role, catalyzes the key reaction of chlorophyll catabolism, porphyrin macrocycle cleavage of pheophorbide a (pheide a) to a primary fluorescent catabolite (pFCC). Works in a two-step reaction with red chlorophyll catabolite reductase (RCCR). Creates the intermediate RCC through the opening of the porphyrin macrocycle by the introduction of one atom of molecular oxygen at the alpha-methine bridge. Seems to be specific for pheide a. Belongs to the chlorophyll catabolic enzymes (CCEs). May play a role in senescence and response to wounding. The protein is Pheophorbide a oxygenase, chloroplastic of Oryza sativa subsp. japonica (Rice).